The chain runs to 215 residues: Deoxyadenosine kinase (215 aa).

Position 9–17 (9–17 (GPIGAGKSS)) interacts with ATP. E33, Y45, and N56 together coordinate substrate. The active-site Proton acceptor is D79. Residues R80, D85, and E150 each contribute to the substrate site.

This sequence belongs to the DCK/DGK family. As to quaternary structure, heterodimer of a deoxyadenosine (DAK) and a deoxyguanosine kinase (DGK).

It catalyses the reaction 2'-deoxyadenosine + ATP = dAMP + ADP + H(+). DGK/DAK plays an essential role in generating the deoxyribonucleotide precursors, dGTP and dATP, for DNA metabolism. This Lactobacillus acidophilus (strain ATCC 700396 / NCK56 / N2 / NCFM) protein is Deoxyadenosine kinase.